The sequence spans 489 residues: MFS-type transporter MFS19 (489 aa).

A compositionally biased stretch (basic and acidic residues) spans 1-12; the sequence is MAHSTAGDRDPE. Residues 1–42 are disordered; that stretch reads MAHSTAGDRDPEVGSEQHSSIAQLHTESMSDPWGDSNSPENP. The segment covering 16–41 has biased composition (polar residues); the sequence is EQHSSIAQLHTESMSDPWGDSNSPEN. A helical membrane pass occupies residues 52–72; that stretch reads FHVAIVSIFTLTANLAATMFA. N-linked (GlcNAc...) asparagine glycans are attached at residues N83 and N86. 11 helical membrane-spanning segments follow: residues 91–111, 127–147, 149–169, 180–200, 208–228, 282–302, 321–341, 361–381, 388–408, 425–445, and 454–474; these read AMTVSLYVLGFAFGPLLLAPL, VYIAFTVGCAFSTNVSMFLVF, FLCGCAASGPMSIGGGTVADI, ALFAMGPLLGPVLGPIIGGYV, WTFRIILIMSGIIGLATMFFM, PIVLLISLYTGVLFGLIFLLF, GLAYLGLGIGMFLGLVVFSIL, LILMKWFGPITPLGCFMYGWS, WIVPILGTSIIGFGSLFVVIP, ALAANLLVRSPFGAFLGLVAA, and GWGNSVLGFITLAFTPVPWLF.

This sequence belongs to the major facilitator superfamily.

The protein localises to the cell membrane. Functionally, MFS-type efflux pump involved in the modulation susceptibility to various compounds including cumyl hydroperoxide, potassium superoxide, many singlet oxygen-generating compounds (eosin Y, rose Bengal, hematoporphyrin, methylene blue, and cercosporin), and the cell wall biosynthesis inhibitor Congo red. Involved in oxidative stress tolerance, colonization, and lesion formation. The polypeptide is MFS-type transporter MFS19 (Alternaria alternata (Alternaria rot fungus)).